The following is a 533-amino-acid chain: Hydroxylamine reductase (533 aa).

Residues Cys-3, Cys-6, Cys-15, and Cys-21 each coordinate [4Fe-4S] cluster. His-234, Glu-258, Cys-302, Cys-389, Cys-417, Cys-442, Glu-476, and Lys-478 together coordinate hybrid [4Fe-2O-2S] cluster. Cysteine persulfide is present on Cys-389.

Belongs to the HCP family. The cofactor is [4Fe-4S] cluster. Hybrid [4Fe-2O-2S] cluster is required as a cofactor.

The protein resides in the cytoplasm. The catalysed reaction is A + NH4(+) + H2O = hydroxylamine + AH2 + H(+). In terms of biological role, catalyzes the reduction of hydroxylamine to form NH(3) and H(2)O. This Maridesulfovibrio salexigens (strain ATCC 14822 / DSM 2638 / NCIMB 8403 / VKM B-1763) (Desulfovibrio salexigens) protein is Hydroxylamine reductase.